We begin with the raw amino-acid sequence, 174 residues long: Squamosa promoter-binding-like protein 4 (174 aa).

The disordered stretch occupies residues M1–R42. The span at V19 to V33 shows a compositional bias: acidic residues. An SBP-type zinc finger spans residues L51 to S128. Residues C54, C59, C76, H79, C95, C98, H102, and C114 each contribute to the Zn(2+) site. The short motif at K111–K127 is the Bipartite nuclear localization signal element. The segment covering L118–K127 has biased composition (basic residues). Disordered regions lie at residues L118 to V148 and S155 to R174. Polar residues predominate over residues M163–R174.

Requires Zn(2+) as cofactor. As to expression, expressed in the rib meristem and inter-primordial tissue of the inflorescence apex.

The protein resides in the nucleus. It localises to the cytoplasm. In terms of biological role, trans-acting factor that binds specifically to the consensus nucleotide sequence 5'-TNCGTACAA-3' of AP1 promoter. Promotes both vegetative phase change and flowering. The sequence is that of Squamosa promoter-binding-like protein 4 (SPL4) from Arabidopsis thaliana (Mouse-ear cress).